We begin with the raw amino-acid sequence, 73 residues long: UPF0270 protein SG2298 (73 aa).

Belongs to the UPF0270 family.

This Sodalis glossinidius (strain morsitans) protein is UPF0270 protein SG2298.